A 276-amino-acid chain; its full sequence is Insulin-induced gene 1 protein (276 aa).

Disordered stretches follow at residues 1-26 (MPRLDDHLWRGPCAKGTKHRSHPRAS) and 49-73 (AAHGALGTDPAHGPQSAGVGGQGSS). At 1 to 83 (MPRLDDHLWR…SHVNSWHHHL (83 aa)) the chain is on the cytoplasmic side. Residues 16–25 (GTKHRSHPRA) show a composition bias toward basic residues. A helical transmembrane segment spans residues 84–106 (VQRSLVLFSVGVVLALVLNLLQV). The Extracellular segment spans residues 107–125 (QRNVTLFPDEVIATIFSSA). The chain crosses the membrane as a helical span at residues 126–143 (WWVPPCCGTAAAVVGLLY). Topologically, residues 144–158 (PCIDSHLGEPHKFKR) are cytoplasmic. Residues Lys-155 and Lys-157 each participate in a glycyl lysine isopeptide (Lys-Gly) (interchain with G-Cter in ubiquitin) cross-link. The helical transmembrane segment at 159–181 (EWASVMRCVAVFVGINHASAKLD) threads the bilayer. Residues 182–184 (FAN) are Extracellular-facing. A helical membrane pass occupies residues 185-203 (NVQLSLTLAALSLGLWWTF). Residues 204 to 208 (DRSRS) are Cytoplasmic-facing. Ser-206 carries the phosphoserine modification. Residues 209-230 (GLGLGITIAFLATLITQLLVYN) form a helical membrane-spanning segment. Over 231–244 (GVYQYTSPDFLYIR) the chain is Extracellular. The helical transmembrane segment at 245–262 (SWLPCIFFSGGVTVGNIG) threads the bilayer. At 263–276 (RQLAMGVPEKPHSD) the chain is on the cytoplasmic side. The KxHxx motif lies at 270 to 276 (PEKPHSD).

The protein belongs to the INSIG family. In terms of assembly, interacts with SCAP; interaction is direct and only takes place in the presence of sterols; it prevents interaction between SCAP and the coat protein complex II (COPII). Associates with the SCAP-SREBP complex (composed of SCAP and SREBF1/SREBP1 or SREBF2/SREBP2); association is mediated via its interaction with SCAP and only takes place in the presence of sterols. Interaction with SCAP is mutually exclusive with PAQR3. Interacts with HMGCR (via its SSD); the interaction, accelerated by sterols, leads to the recruitment of HMGCR to AMFR/gp78 for its ubiquitination by the sterol-mediated ERAD pathway. Interacts with AMFR/gp78 (via its membrane domain); the interaction recruits HMCR at the ER membrane for its ubiquitination and degradation by the sterol-mediated ERAD pathway. Interacts with SOAT2/ACAT2; leading to promote recruitment of AMFR/gp78 and subsequent ubiquitination of SOAT2/ACAT2. Interacts with RNF139. Interacts with RNF145. Phosphorylation at Ser-206 by PCK1 reduces binding to oxysterol, disrupting the interaction between INSIG1 and SCAP, thereby promoting nuclear translocation of SREBP proteins (SREBF1/SREBP1 or SREBF2/SREBP2) and subsequent transcription of downstream lipogenesis-related genes. In terms of processing, ubiquitinated by AMFR/gp78 in response to sterol deprivation, leading to its degradation: when the SCAP-SREBP complex becomes dissociated from INSIG1, INSIG1 is then ubiquitinated and degraded in proteasomes. Although ubiquitination is required for rapid INSIG1 degradation, it is not required for release of the SCAP-SREBP complex. Ubiquitinated by RNF139.

Its subcellular location is the endoplasmic reticulum membrane. In terms of biological role, oxysterol-binding protein that mediates feedback control of cholesterol synthesis by controlling both endoplasmic reticulum to Golgi transport of SCAP and degradation of HMGCR. Acts as a negative regulator of cholesterol biosynthesis by mediating the retention of the SCAP-SREBP complex in the endoplasmic reticulum, thereby blocking the processing of sterol regulatory element-binding proteins (SREBPs) SREBF1/SREBP1 and SREBF2/SREBP2. Binds oxysterol, including 25-hydroxycholesterol, regulating interaction with SCAP and retention of the SCAP-SREBP complex in the endoplasmic reticulum. In presence of oxysterol, interacts with SCAP, retaining the SCAP-SREBP complex in the endoplasmic reticulum, thereby preventing SCAP from escorting SREBF1/SREBP1 and SREBF2/SREBP2 to the Golgi. Sterol deprivation or phosphorylation by PCK1 reduce oxysterol-binding, disrupting the interaction between INSIG1 and SCAP, thereby promoting Golgi transport of the SCAP-SREBP complex, followed by processing and nuclear translocation of SREBF1/SREBP1 and SREBF2/SREBP2. Also regulates cholesterol synthesis by regulating degradation of HMGCR: initiates the sterol-mediated ubiquitin-mediated endoplasmic reticulum-associated degradation (ERAD) of HMGCR via recruitment of the reductase to the ubiquitin ligases AMFR/gp78 and/or RNF139. Also regulates degradation of SOAT2/ACAT2 when the lipid levels are low: initiates the ubiquitin-mediated degradation of SOAT2/ACAT2 via recruitment of the ubiquitin ligases AMFR/gp78. The sequence is that of Insulin-induced gene 1 protein from Bos taurus (Bovine).